The primary structure comprises 245 residues: Carboxymethylenebutenolidase homolog (245 aa).

Alanine 2 is modified (N-acetylalanine). At lysine 36 the chain carries N6-acetyllysine. Residues cysteine 132, aspartate 179, and histidine 212 contribute to the active site. Serine 223 bears the Phosphoserine mark.

It belongs to the dienelactone hydrolase family.

The protein resides in the cytoplasm. Its subcellular location is the cytosol. In terms of biological role, cysteine hydrolase. The polypeptide is Carboxymethylenebutenolidase homolog (CMBL) (Pongo abelii (Sumatran orangutan)).